The sequence spans 265 residues: AT-hook motif nuclear-localized protein 18 (265 aa).

The disordered stretch occupies residues 1-75 (MDEVSRSHTP…AGSKNKPKAP (75 aa)). A compositionally biased stretch (basic residues) spans 19-30 (HYHHQNAGRQKR). A DNA-binding region (a.T hook) is located at residues 59-71 (RRPRGRPAGSKNK). Residues 83-217 (ANAFRCHVME…EEEETEREID (135 aa)) form the PPC domain.

The protein localises to the nucleus. Its function is as follows. Transcription factor that specifically binds AT-rich DNA sequences related to the nuclear matrix attachment regions (MARs). Acts redundantly with AHL22, AHL27 and AHL29 in the regulation of flowering and regulation of the hypocotyl elongation. This chain is AT-hook motif nuclear-localized protein 18, found in Arabidopsis thaliana (Mouse-ear cress).